The following is a 168-amino-acid chain: ATP synthase subunit b (168 aa).

Residues 9–29 (AIPFGTIAYTLFIFLLLLVML) traverse the membrane as a helical segment.

This sequence belongs to the ATPase B chain family. F-type ATPases have 2 components, F(1) - the catalytic core - and F(0) - the membrane proton channel. F(1) has five subunits: alpha(3), beta(3), gamma(1), delta(1), epsilon(1). F(0) has three main subunits: a(1), b(2) and c(10-14). The alpha and beta chains form an alternating ring which encloses part of the gamma chain. F(1) is attached to F(0) by a central stalk formed by the gamma and epsilon chains, while a peripheral stalk is formed by the delta and b chains.

Its subcellular location is the cell membrane. Its function is as follows. F(1)F(0) ATP synthase produces ATP from ADP in the presence of a proton or sodium gradient. F-type ATPases consist of two structural domains, F(1) containing the extramembraneous catalytic core and F(0) containing the membrane proton channel, linked together by a central stalk and a peripheral stalk. During catalysis, ATP synthesis in the catalytic domain of F(1) is coupled via a rotary mechanism of the central stalk subunits to proton translocation. Functionally, component of the F(0) channel, it forms part of the peripheral stalk, linking F(1) to F(0). The polypeptide is ATP synthase subunit b (Bacillus cereus (strain ATCC 10987 / NRS 248)).